Consider the following 436-residue polypeptide: Protein arginine methyltransferase NDUFAF7, mitochondrial (436 aa).

The transit peptide at 1–41 (MNALVRRCVARAGLPCIWRGKCYSSGNEPAESNQVTPMLRH) directs the protein to the mitochondrion. The tract at residues 411–436 (GSQERNACQSKTPSSSVAGFDELVWQ) is disordered. Residues 413 to 427 (QERNACQSKTPSSSV) are compositionally biased toward polar residues.

The protein belongs to the NDUFAF7 family. Interacts with NDUFS2.

The protein resides in the mitochondrion. The enzyme catalyses L-arginyl-[protein] + 2 S-adenosyl-L-methionine = N(omega),N(omega)'-dimethyl-L-arginyl-[protein] + 2 S-adenosyl-L-homocysteine + 2 H(+). Its function is as follows. Arginine methyltransferase involved in the assembly or stability of mitochondrial NADH:ubiquinone oxidoreductase complex (complex I). Acts by mediating symmetric dimethylation of 'Arg-118' of NDUFS2 after it assembles into the complex I, stabilizing the early intermediate complex. The polypeptide is Protein arginine methyltransferase NDUFAF7, mitochondrial (Mus musculus (Mouse)).